A 698-amino-acid chain; its full sequence is tRNA (guanine(37)-N(1))-methyltransferase (698 aa).

The segment at 207–242 is disordered; the sequence is SPPSVSLTENQDGDPQAQDSLRAVAAPPSPSSRKRG. S-adenosyl-L-methionine contacts are provided by residues histidine 427, 465-466, 494-495, and asparagine 536; these read DL and DG.

This sequence belongs to the class I-like SAM-binding methyltransferase superfamily. TRM5/TYW2 family. Monomer.

The protein resides in the mitochondrion matrix. The protein localises to the nucleus. It is found in the cytoplasm. The catalysed reaction is guanosine(37) in tRNA + S-adenosyl-L-methionine = N(1)-methylguanosine(37) in tRNA + S-adenosyl-L-homocysteine + H(+). Functionally, specifically methylates the N1 position of guanosine-37 in various cytoplasmic and mitochondrial tRNAs. Methylation is not dependent on the nature of the nucleoside 5' of the target nucleoside. This is the first step in the biosynthesis of wybutosine (yW), a modified base adjacent to the anticodon of tRNAs and required for accurate decoding. This Leishmania braziliensis protein is tRNA (guanine(37)-N(1))-methyltransferase.